The primary structure comprises 364 residues: MKALILVGGFGTRLRPLTLSLPKPLVDFANKPMILHQIEALKAIGVDEVVLAINYEPEQLLVMSKFSNDVEATLGIKITCSQETEPLGTAGPLALARDKLVDGSGQPFFVLNSDVISDYPLEEMIAFHNAHGGEASIMVTKVDEPSKYGVVVMEEATGRVERFVEKPKLFVGNKINAGIYLLNPSVLDRIELRPTSIEKEIFPQIAEAEKLYAMLLPGFWMDIGQPRDYITGLRLYLDSLRKKSPSKLATGPHILGNVLVDETAEIGEGCLIGPNVAIGPGCVVESGVRLSHCTVMRGVHVKRYACISSSIIGWHSTVGQWARVENMSILGKNVYVCDEIYCNGGVVLHNKEIKSDILKPDIVM.

The GDP-alpha-D-mannose site is built by Leu-6 and Val-7. The diphosphate site is built by Gly-9, Gly-11, Thr-12, Arg-13, and Lys-23. GDP-alpha-D-mannose-binding residues include Gly-88, Asn-112, Asp-114, Gly-149, and Asn-176.

The protein belongs to the transferase hexapeptide repeat family.

The enzyme catalyses alpha-D-mannose 1-phosphate + GTP + H(+) = GDP-alpha-D-mannose + diphosphate. It functions in the pathway nucleotide-sugar biosynthesis; GDP-alpha-D-mannose biosynthesis; GDP-alpha-D-mannose from alpha-D-mannose 1-phosphate (GTP route): step 1/1. Its function is as follows. Catalyzes a reaction of the Smirnoff-Wheeler pathway, the major route to ascorbate biosynthesis in plants. In Arabidopsis thaliana (Mouse-ear cress), this protein is Probable mannose-1-phosphate guanylyltransferase 2.